The following is a 349-amino-acid chain: MSQEKERLISGKLVTDDAKLDTSLRPRCLPDFIGQKRLKDNLGVAIQAAKQRGEALDHVLLYGPPGLGKTTLSHIIALEMGVNIRITSGPAIERQGDLAAILTNLKPFDILFIDEIHRLSRNVEEVLYPAMEDYALDIMVGKGPGARSLRLKLPHFTLIGATTRYAMLSAPLRDRFGSIFRLDFYDEEAIHDIVRRSARILGVEADENGLHQIACRSRGTPRVANRLLRRVRDYAQVKGNGLITADIAAESLACLEVDKLGLDEIDHKVLKTIIHKFGGGPVGLETIAAAISEEADTIMDVYEPYLLQLGFLERTPRGRQATRLAYQHLSIPYQNDKNNQQGLWTENGS.

The large ATPase domain (RuvB-L) stretch occupies residues 1 to 185; that stretch reads MSQEKERLIS…FGSIFRLDFY (185 aa). Residues Leu-24, Arg-25, Gly-66, Lys-69, Thr-70, Thr-71, 132–134, Arg-175, Tyr-185, and Arg-222 contribute to the ATP site; that span reads EDY. Thr-70 is a Mg(2+) binding site. The tract at residues 186 to 256 is small ATPAse domain (RuvB-S); that stretch reads DEEAIHDIVR…IAAESLACLE (71 aa). Positions 259 to 349 are head domain (RuvB-H); the sequence is KLGLDEIDHK…QQGLWTENGS (91 aa). Arg-314 and Arg-319 together coordinate DNA.

Belongs to the RuvB family. In terms of assembly, homohexamer. Forms an RuvA(8)-RuvB(12)-Holliday junction (HJ) complex. HJ DNA is sandwiched between 2 RuvA tetramers; dsDNA enters through RuvA and exits via RuvB. An RuvB hexamer assembles on each DNA strand where it exits the tetramer. Each RuvB hexamer is contacted by two RuvA subunits (via domain III) on 2 adjacent RuvB subunits; this complex drives branch migration. In the full resolvosome a probable DNA-RuvA(4)-RuvB(12)-RuvC(2) complex forms which resolves the HJ.

The protein localises to the cytoplasm. It carries out the reaction ATP + H2O = ADP + phosphate + H(+). In terms of biological role, the RuvA-RuvB-RuvC complex processes Holliday junction (HJ) DNA during genetic recombination and DNA repair, while the RuvA-RuvB complex plays an important role in the rescue of blocked DNA replication forks via replication fork reversal (RFR). RuvA specifically binds to HJ cruciform DNA, conferring on it an open structure. The RuvB hexamer acts as an ATP-dependent pump, pulling dsDNA into and through the RuvAB complex. RuvB forms 2 homohexamers on either side of HJ DNA bound by 1 or 2 RuvA tetramers; 4 subunits per hexamer contact DNA at a time. Coordinated motions by a converter formed by DNA-disengaged RuvB subunits stimulates ATP hydrolysis and nucleotide exchange. Immobilization of the converter enables RuvB to convert the ATP-contained energy into a lever motion, pulling 2 nucleotides of DNA out of the RuvA tetramer per ATP hydrolyzed, thus driving DNA branch migration. The RuvB motors rotate together with the DNA substrate, which together with the progressing nucleotide cycle form the mechanistic basis for DNA recombination by continuous HJ branch migration. Branch migration allows RuvC to scan DNA until it finds its consensus sequence, where it cleaves and resolves cruciform DNA. The polypeptide is Holliday junction branch migration complex subunit RuvB (Dehalococcoides mccartyi (strain CBDB1)).